The following is a 312-amino-acid chain: Ribosomal RNA small subunit methyltransferase H (312 aa).

S-adenosyl-L-methionine-binding positions include 34–36 (AGH), D54, F81, D102, and Q109.

It belongs to the methyltransferase superfamily. RsmH family.

The protein resides in the cytoplasm. The catalysed reaction is cytidine(1402) in 16S rRNA + S-adenosyl-L-methionine = N(4)-methylcytidine(1402) in 16S rRNA + S-adenosyl-L-homocysteine + H(+). In terms of biological role, specifically methylates the N4 position of cytidine in position 1402 (C1402) of 16S rRNA. The sequence is that of Ribosomal RNA small subunit methyltransferase H from Citrifermentans bemidjiense (strain ATCC BAA-1014 / DSM 16622 / JCM 12645 / Bem) (Geobacter bemidjiensis).